We begin with the raw amino-acid sequence, 572 residues long: Proline--tRNA ligase (572 aa).

Belongs to the class-II aminoacyl-tRNA synthetase family. ProS type 1 subfamily. Homodimer.

Its subcellular location is the cytoplasm. It carries out the reaction tRNA(Pro) + L-proline + ATP = L-prolyl-tRNA(Pro) + AMP + diphosphate. In terms of biological role, catalyzes the attachment of proline to tRNA(Pro) in a two-step reaction: proline is first activated by ATP to form Pro-AMP and then transferred to the acceptor end of tRNA(Pro). As ProRS can inadvertently accommodate and process non-cognate amino acids such as alanine and cysteine, to avoid such errors it has two additional distinct editing activities against alanine. One activity is designated as 'pretransfer' editing and involves the tRNA(Pro)-independent hydrolysis of activated Ala-AMP. The other activity is designated 'posttransfer' editing and involves deacylation of mischarged Ala-tRNA(Pro). The misacylated Cys-tRNA(Pro) is not edited by ProRS. This Psychrobacter arcticus (strain DSM 17307 / VKM B-2377 / 273-4) protein is Proline--tRNA ligase.